The following is a 2774-amino-acid chain: Teneurin-2 (2774 aa).

Positions 1 to 375 constitute a Teneurin N-terminal domain; the sequence is MDVKDRRHRS…KPSKYCSWKC (375 aa). Residues 1–379 lie on the Cytoplasmic side of the membrane; that stretch reads MDVKDRRHRS…YCSWKCAALS (379 aa). A phosphoserine mark is found at serine 90 and serine 124. The segment at 111-271 is disordered; sequence TGSDADSDTE…HHHSSANSLN (161 aa). The segment covering 141-155 has biased composition (polar residues); the sequence is SSGLSSRENSALTLT. Position 155 is a phosphothreonine (threonine 155). Serine 157 is modified (phosphoserine). Residues 159–168 show a composition bias toward basic and acidic residues; it reads NENKSDDENG. The segment covering 176–188 has biased composition (low complexity); the sequence is SPSLLPSAQLPSS. Polar residues predominate over residues 202–211; that stretch reads DSNTSHQIMD. A compositionally biased stretch (low complexity) spans 229–240; that stretch reads SGPQQASSSGPP. A helical transmembrane segment spans residues 380-400; the sequence is AIAAALLLAILLAYFIAMHLL. Over 401 to 2774 the chain is Extracellular; that stretch reads GLNWQLQPAD…FLRQNEMGKR (2374 aa). N-linked (GlcNAc...) asparagine glycans are attached at residues asparagine 443 and asparagine 482. 8 EGF-like domains span residues 575–603, 598–634, 636–668, 669–701, 702–735, 738–766, 769–797, and 808–841; these read DCPRNCHGNGECVSGVCHCFPGFLGADCA, LGADCAKAACPVLCSGNGQYSKGTCQCYSGWKGAECD, PMNQCIDPSCGGHGSCIDGNCVCSAGYKGEHCE, EVDCLDPTCSSHGVCVNGECLCSPGWGGLNCEL, ARVQCPDQCSGHGTYLPDTGLCSCDPNWMGPDCS, VCSVDCGTHGVCIGGACRCEEGWTGAACD, VCHPRCIEHGTCKDGKCECREGWNGEHCT, and DGCPDLCNGNGRCTLGQNSWQCVCQTGWRGPGCN. 22 cysteine pairs are disulfide-bonded: cysteine 576–cysteine 586, cysteine 580–cysteine 591, cysteine 593–cysteine 602, cysteine 611–cysteine 622, cysteine 624–cysteine 633, cysteine 640–cysteine 651, cysteine 645–cysteine 656, cysteine 658–cysteine 667, cysteine 672–cysteine 683, cysteine 677–cysteine 688, cysteine 690–cysteine 699, cysteine 710–cysteine 723, cysteine 725–cysteine 734, cysteine 739–cysteine 749, cysteine 743–cysteine 754, cysteine 756–cysteine 765, cysteine 770–cysteine 780, cysteine 774–cysteine 785, cysteine 787–cysteine 796, cysteine 810–cysteine 820, cysteine 814–cysteine 829, and cysteine 831–cysteine 840. Asparagine 925, asparagine 948, and asparagine 1267 each carry an N-linked (GlcNAc...) asparagine glycan. 5 NHL repeats span residues 1272–1316, 1342–1386, 1401–1452, 1474–1501, and 1530–1573; these read LELR…VKSL, ARCG…NGII, LSCD…IAGR, LESASAIAISHTGVLYITETDEKKINRL, and CYSG…VSKN. A YD 1 repeat occupies 1583-1602; the sequence is YEAASPGEQELYVFNADGIH. N-linked (GlcNAc...) asparagine glycosylation is present at asparagine 1616. 3 YD repeats span residues 1619 to 1639, 1682 to 1701, and 1702 to 1724; these read YSTDNDVTELIDNNGNSLKIR, YDGNTGLLATKSDETGWTTF, and YDYDHEGRLTNVTRPTGVVTSLH. Residues asparagine 1712, asparagine 1749, asparagine 1773, asparagine 1807, and asparagine 1892 are each glycosylated (N-linked (GlcNAc...) asparagine). YD repeat units follow at residues 1895 to 1914, 1936 to 1954, 1955 to 1975, 1982 to 1999, 2000 to 2021, 2022 to 2039, 2042 to 2062, 2065 to 2085, 2093 to 2113, 2119 to 2136, 2137 to 2163, 2165 to 2178, 2179 to 2202, 2205 to 2225, 2226 to 2246, 2248 to 2268, 2280 to 2300, and 2302 to 2322; these read YFFNGRLAGLQRGAMSERTD, YLDKSMVLLLQSQRQYIFE, YDSSDRLLAVTMPSVARHSMS, YIRNIYNPPESNASVIFD, YSDDGRILKTSFLGTGRQVFYK, YGKLSKLSEIVYDSTAVT, YDETTGVLKMVNLQSGGFSCT, YRKIGPLVDKQIYRFSEEGMV, YHDNSFRIASIKPVISETPLP, YDEISGKVEHFGKFGVIY, YDINQIITTAVMTLSKHFDTHGRIKEV, YEMFRSLMYWMTVQ, YDSMGRVIKRELKLGPYANTTKYT, YDGDGQLQSVAVNDRPTWRYS, YDLNGNLHLLNPGNSVRLMPL, YDLRDRITRLGDVQYKIDDDG, YNSKGLLTRAYNKASGWSVQY, and YDGVGRRASYKTNLGHHLQYF. An N-linked (GlcNAc...) asparagine glycan is attached at asparagine 1993. N-linked (GlcNAc...) asparagine glycosylation occurs at asparagine 2197. The N-linked (GlcNAc...) asparagine glycan is linked to asparagine 2337. A YD 23 repeat occupies 2348–2389; it reads YDLQGHLFAMESSSGEEYYVASDNTGTPLAVFSINGLMIKQL. Asparagine 2648 carries an N-linked (GlcNAc...) asparagine glycan.

This sequence belongs to the tenascin family. Teneurin subfamily. Homodimer; disulfide-linked. Heterodimer with either TENM1 or TENM3. May also form heterodimer with TENM4. Isoform 2 (C-terminal globular domain) interacts with ADGRL1 isoform 2. In terms of processing, derives from the membrane form by proteolytic processing. Post-translationally, derives from the plasma membrane form by proteolytic cleavage and translocates to the nucleus. Homophilic binding of the C-terminal extracellular domain stimulates its proteolytic cleavage and release in the cytoplasmic. Is subjected to rapid degradation by the proteasome pathway. Highly expressed in heart, followed by brain, liver, kidney and fetal brain and weakly expressed in lung and testis. No expression was detected in skeletal muscle, pancreas, spleen, ovary and fetal liver.

It is found in the cell membrane. The protein resides in the presynaptic cell membrane. It localises to the postsynaptic cell membrane. Its subcellular location is the endoplasmic reticulum. The protein localises to the golgi apparatus. It is found in the synapse. The protein resides in the cell projection. It localises to the dendritic spine. Its subcellular location is the filopodium. The protein localises to the growth cone. It is found in the nucleus. The protein resides in the PML body. Its function is as follows. Involved in neural development, regulating the establishment of proper connectivity within the nervous system. Acts as a ligand of the ADGRL1 and ADGRL3 receptors that are expressed at the surface of adjacent cells. Promotes the formation of filopodia and enlarged growth cone in neuronal cells. Mediates axon guidance and homophilic and heterophilic cell-cell adhesion. May function as a cellular signal transducer. In terms of biological role, acts as a ligand of the ADGRL1 receptor. Mediates axon guidance and heterophilic cell-cell adhesion. Functionally, induces gene transcription inhibition. The sequence is that of Teneurin-2 (TENM2) from Homo sapiens (Human).